The sequence spans 201 residues: Putative Ras-related protein Rab-1C (201 aa).

Residues G15–C23, Y33–T40, and D63–Q67 each bind GTP. The Effector region signature appears at Y37–F45. The residue at position 76 (S76) is a (Microbial infection) O-(2-cholinephosphoryl)serine. Residues N121–D124 and S151–K153 each bind GTP. Residues G174–C201 are disordered. Residues C200 and C201 are each lipidated (S-geranylgeranyl cysteine).

It belongs to the small GTPase superfamily. Rab family. In terms of processing, (Microbial infection) Phosphocholinated at Ser-76 by L.pneumophila AnkX, leading to displace GDP dissociation inhibitors (GDI). Both GDP-bound and GTP-bound forms can be phosphocholinated. Dephosphocholinated by L.pneumophila Lem3, restoring accessibility to L.pneumophila GTPase effector LepB. (Microbial infection) Glycosylated by S.typhimurium protein Ssek3: arginine GlcNAcylation prevents GTPase activity, thereby disrupting vesicular protein transport from the endoplasmic reticulum (ER) to the Golgi compartment.

It is found in the membrane. It localises to the cytoplasm. It carries out the reaction GTP + H2O = GDP + phosphate + H(+). Protein transport. Probably involved in vesicular traffic. This chain is Putative Ras-related protein Rab-1C (RAB1C), found in Homo sapiens (Human).